Consider the following 261-residue polypeptide: tRNA (guanine-N(7)-)-methyltransferase (261 aa).

S-adenosyl-L-methionine-binding residues include Glu-75, Glu-100, Asp-127, and Asp-150. Asp-150 is an active-site residue. Lys-154 contributes to the substrate binding site. Residues 156–161 (RHNKRR) are interaction with RNA. Residues Asp-186 and 223–226 (THFE) contribute to the substrate site.

This sequence belongs to the class I-like SAM-binding methyltransferase superfamily. TrmB family.

The catalysed reaction is guanosine(46) in tRNA + S-adenosyl-L-methionine = N(7)-methylguanosine(46) in tRNA + S-adenosyl-L-homocysteine. It functions in the pathway tRNA modification; N(7)-methylguanine-tRNA biosynthesis. In terms of biological role, catalyzes the formation of N(7)-methylguanine at position 46 (m7G46) in tRNA. The polypeptide is tRNA (guanine-N(7)-)-methyltransferase (Xanthomonas axonopodis pv. citri (strain 306)).